The chain runs to 462 residues: Exodeoxyribonuclease 7 large subunit (462 aa).

Belongs to the XseA family. In terms of assembly, heterooligomer composed of large and small subunits.

The protein resides in the cytoplasm. It carries out the reaction Exonucleolytic cleavage in either 5'- to 3'- or 3'- to 5'-direction to yield nucleoside 5'-phosphates.. In terms of biological role, bidirectionally degrades single-stranded DNA into large acid-insoluble oligonucleotides, which are then degraded further into small acid-soluble oligonucleotides. The chain is Exodeoxyribonuclease 7 large subunit from Pectobacterium carotovorum subsp. carotovorum (strain PC1).